Consider the following 505-residue polypeptide: DNA repair protein RadA (505 aa).

The segment at 10–27 adopts a C4-type zinc-finger fold; that stretch reads CSACGADHAQWFGRCPKC. Residue 107–114 coordinates ATP; sequence GDPGIGKS. A RadA KNRFG motif motif is present at residues 281 to 285; the sequence is KNRFG. Residues 380–505 form a lon-protease-like region; it reads DAYLSVAGGL…KIEEDLGKKD (126 aa). Positions 485–505 are disordered; that stretch reads NTTDQGNGSEAKIEEDLGKKD. A compositionally biased stretch (basic and acidic residues) spans 495–505; it reads AKIEEDLGKKD.

This sequence belongs to the RecA family. RadA subfamily.

DNA-dependent ATPase involved in processing of recombination intermediates, plays a role in repairing DNA breaks. Stimulates the branch migration of RecA-mediated strand transfer reactions, allowing the 3' invading strand to extend heteroduplex DNA faster. Binds ssDNA in the presence of ADP but not other nucleotides, has ATPase activity that is stimulated by ssDNA and various branched DNA structures, but inhibited by SSB. Does not have RecA's homology-searching function. The sequence is that of DNA repair protein RadA from Synechocystis sp. (strain ATCC 27184 / PCC 6803 / Kazusa).